Consider the following 369-residue polypeptide: 1-aminocyclopropane-1-carboxylate oxidase homolog 3 (369 aa).

In terms of domain architecture, Fe2OG dioxygenase spans K217–G318. Residues H241, D243, and H297 each contribute to the Fe cation site.

This sequence belongs to the iron/ascorbate-dependent oxidoreductase family. The cofactor is Fe cation.

The polypeptide is 1-aminocyclopropane-1-carboxylate oxidase homolog 3 (Arabidopsis thaliana (Mouse-ear cress)).